A 471-amino-acid polypeptide reads, in one-letter code: MGETAEGVEAGEKYVSIPQLAGVGTLLSNGGKEIPLSSIEGKRICLFFSAHWCRPCRNFTPKLLQIYRKLRNTCKNMEIIFISLDRDEISFLDYFKGMPWLALPFDTGLRQKLCVQFDIEHIPALIPLSTTLSHGFRVEEDAVKLVEEYGVDAYPFGAKRRSELEGMDDARRQGGNLLQLLGCKEREYVISADGIKTPISDLNGKTIGLYFGAHWCPPCRAFTKQLREAYDELKALRPGNFQVIFISMDRNEEEFQASLSAMPWFAIPYSDTTVQELSRIFTIKGIPTLLILGPDGKVFKTDGRRIISKYGAMAFPFTESRAYELEEVLKKERDSLPHRVRDHRHEHELELDMAKAYLSTQLFHQTPSVQPCRLNLKTLREEYHLIFTNSNRKTSRPQSSYTRQQRDLNNLYSDPKHLPQLHKHFDQSNVATAENSLRFLNGEPENSDISSIHVAFADLAGKIRGEDDKRD.

Thioredoxin domains lie at 15–173 (VSIP…ARRQ) and 179–334 (QLLG…KERD).

The protein belongs to the nucleoredoxin family.

The catalysed reaction is [protein]-dithiol + NAD(+) = [protein]-disulfide + NADH + H(+). It carries out the reaction [protein]-dithiol + NADP(+) = [protein]-disulfide + NADPH + H(+). Functionally, probable thiol-disulfide oxidoreductase that may participate in various redox reactions. In Oryza sativa subsp. japonica (Rice), this protein is Probable nucleoredoxin 3.